The sequence spans 315 residues: Porphobilinogen deaminase (315 aa).

Cysteine 245 is subject to S-(dipyrrolylmethanemethyl)cysteine.

The protein belongs to the HMBS family. As to quaternary structure, monomer. Requires dipyrromethane as cofactor.

It catalyses the reaction 4 porphobilinogen + H2O = hydroxymethylbilane + 4 NH4(+). Its pathway is porphyrin-containing compound metabolism; protoporphyrin-IX biosynthesis; coproporphyrinogen-III from 5-aminolevulinate: step 2/4. It participates in porphyrin-containing compound metabolism; chlorophyll biosynthesis. Its function is as follows. Tetrapolymerization of the monopyrrole PBG into the hydroxymethylbilane pre-uroporphyrinogen in several discrete steps. The chain is Porphobilinogen deaminase from Prochlorococcus marinus (strain NATL2A).